The following is a 149-amino-acid chain: SPbeta prophage-derived putative transcriptional regulator YosT (149 aa).

This is SPbeta prophage-derived putative transcriptional regulator YosT (yosT) from Bacillus subtilis (strain 168).